The sequence spans 304 residues: Glutaminase (304 aa).

Residues S63, N113, E157, N164, Y188, Y240, and V258 each coordinate substrate.

Belongs to the glutaminase family. As to quaternary structure, homotetramer.

It catalyses the reaction L-glutamine + H2O = L-glutamate + NH4(+). The protein is Glutaminase of Chromobacterium violaceum (strain ATCC 12472 / DSM 30191 / JCM 1249 / CCUG 213 / NBRC 12614 / NCIMB 9131 / NCTC 9757 / MK).